A 440-amino-acid polypeptide reads, in one-letter code: RNA polymerase II C-terminal domain phosphatase-like 4 (440 aa).

A compositionally biased stretch (low complexity) spans 1–36 (MSVASDSPVHSSSSSDDLAAFLDAELDSASDASSGP). Residues 1–49 (MSVASDSPVHSSSSSDDLAAFLDAELDSASDASSGPSEEEEAEDDVESG) form a disordered region. The span at 37 to 47 (SEEEEAEDDVE) shows a compositional bias: acidic residues. An FCP1 homology domain is found at 118–292 (QRQRKLYLVL…DHRYKSLSEL (175 aa)). Positions 337–429 (VRKEILKGCK…MKQPEENFGL (93 aa)) constitute a BRCT domain.

In terms of assembly, interacts with RAP74. Requires Mg(2+) as cofactor. The cofactor is Co(2+). Mn(2+) is required as a cofactor.

The protein resides in the nucleus. It carries out the reaction O-phospho-L-seryl-[protein] + H2O = L-seryl-[protein] + phosphate. The enzyme catalyses O-phospho-L-threonyl-[protein] + H2O = L-threonyl-[protein] + phosphate. Processively dephosphorylates 'Ser-2' and/or 'Ser-5' of the heptad repeats YSPTSPS in the C-terminal domain of the largest RNA polymerase II subunit (RPB1). This promotes the activity of RNA polymerase II. Required for normal plant growth. The protein is RNA polymerase II C-terminal domain phosphatase-like 4 (CPL4) of Arabidopsis thaliana (Mouse-ear cress).